Reading from the N-terminus, the 1958-residue chain is Echinoderm microtubule-associated protein-like 6 (1958 aa).

WD repeat units follow at residues 59 to 100, 104 to 145, 148 to 187, 195 to 233, 235 to 273, 280 to 321, 323 to 362, 364 to 403, 406 to 445, and 561 to 601; these read GHND…TVSL, VHTH…LLAS, GHSD…LTAK, GDLQ…RTIQ, AHSA…TKID, GYKG…LILQ, HCEG…LIAR, NMEE…EVVH, DRKE…KKIG, and GHSA…VSNG. The interval 603 to 626 is disordered; it reads LETAPQEGGADSYSEESDSDLSDV. A compositionally biased stretch (acidic residues) spans 615–626; it reads YSEESDSDLSDV. WD repeat units follow at residues 725-766, 770-811, 814-853, 861-900, 901-940, 996-1035, 1038-1077, 1080-1120, 1191-1230, and 1236-1276; these read GHDD…CLSL, QHQR…KIAT, GHKD…FTSK, GKLE…KTVK, AHDG…KTYA, HMEG…RMLA, KLKK…DMVS, HRKE…RVGI, SDIT…QHAR, and GHSA…TQES. Over residues 1322–1337 the composition is skewed to basic and acidic residues; sequence KPHQQLKEVSVEERPP. The disordered stretch occupies residues 1322–1353; that stretch reads KPHQQLKEVSVEERPPVSRAAPQPEKLQKNNI. 10 WD repeats span residues 1412 to 1456, 1460 to 1501, 1504 to 1543, 1553 to 1591, 1593 to 1638, 1685 to 1724, 1726 to 1767, 1768 to 1807, 1880 to 1919, and 1925 to 1958; these read EHTD…TLSM, FHSK…KVAS, GHLE…LLYK, AKMQ…RLVA, AHTG…CRAF, HMEG…LLNK, SLGH…GKKR, DRKS…NLNR, ADKA…KFAK, and GHSA…WRCL.

This sequence belongs to the WD repeat EMAP family.

It localises to the cytoplasm. The protein localises to the cytoskeleton. May modify the assembly dynamics of microtubules, such that microtubules are slightly longer, but more dynamic. The sequence is that of Echinoderm microtubule-associated protein-like 6 (EML6) from Homo sapiens (Human).